A 197-amino-acid polypeptide reads, in one-letter code: uncharacterized protein (197 aa).

A helical membrane pass occupies residues 7 to 27 (PISVGQMVLICIFILIILFVI).

Belongs to the IIV-6 307L family.

Its subcellular location is the membrane. This is an uncharacterized protein from Acheta domesticus (House cricket).